The chain runs to 52 residues: Transmembrane protein ORF52 (52 aa).

Helical transmembrane passes span 11–31 (AFLGVLNALAPIIEGATEIIT) and 32–52 (FMALTYVMTMVIARILGGLFV).

The protein localises to the host membrane. The sequence is that of Transmembrane protein ORF52 from Acidianus filamentous virus 1 (isolate United States/Yellowstone) (AFV-1).